The sequence spans 211 residues: Protein YCF54, chloroplastic (211 aa).

A chloroplast-targeting transit peptide spans 1–80 (MWSVTGALTV…GESTKYHFLV (80 aa)).

Belongs to the ycf54 family. Interacts with LFNR1 and CRD1/CHL27 in chloroplasts.

The protein resides in the plastid. It is found in the chloroplast. Its function is as follows. Involved in the biosynthesis of chlorophyll; acts probably as a scaffolding factor in the MgProto monomethylester (MgProtoME) cyclase complex to stabilize CRD1/CHL27, the catalytic subunit which catalyzes the formation of a fifth isocyclic ring to tetrapyrroles to form protochlorophyllide. The polypeptide is Protein YCF54, chloroplastic (Arabidopsis thaliana (Mouse-ear cress)).